The sequence spans 568 residues: Protein phosphatase 1 regulatory inhibitor subunit 16B (568 aa).

A coiled-coil region spans residues 15 to 55; the sequence is EKVPTLERLRAAQKRRAQQLKKWAQYEQDLQHRKRKHERKR. Residue S69 is modified to Phosphoserine. ANK repeat units follow at residues 100–129, 133–162, 228–257, and 261–290; these read DGLT…NVNA, ELWT…DLLA, QGAT…RVDV, and DGWE…SLSA. The interval 327 to 346 is disordered; that stretch reads RHKSSLSRRTSSAGSRGKVV. S333, S337, and S350 each carry phosphoserine. Positions 333-342 are enriched in low complexity; it reads SRRTSSAGSR. Residues 373–404 form a disordered region; that stretch reads SASEDQRNSTYNGDIRETRTDQENKDPNPRLE. Positions 386 to 404 are enriched in basic and acidic residues; it reads DIRETRTDQENKDPNPRLE. Residue S477 is modified to Phosphoserine. A disordered region spans residues 504–525; sequence GSGVSRTGEGSSEGKAPLIGGR. One copy of the ANK 5 repeat lies at 531–560; it reads SNGTSVYYTVTSGDPPLLKFKAPIEEMEEK. C564 carries the S-palmitoyl cysteine lipid modification. C565 bears the Cysteine methyl ester mark. C565 carries S-farnesyl cysteine lipidation. Positions 566 to 568 are cleaved as a propeptide — removed in mature form; the sequence is RIS.

In terms of assembly, interacts with PPP1CA, PPP1CB and MSN. Interacts (via its fourth ankyrin repeat) with the mature dimeric form of RPSA/LAMR1. Interacts with EEF1A1. Interacts with PTEN. Interacts with ECE1. Phosphorylated by PKA and, after PKA priming, by GSK3B. Phosphorylation by GSK3B reduces its association with PP1C and enhances PP1C activity. Dephosphorylation by its associated PP1C results in enhanced association with PP1C, but reduced PP1C activity.

Its subcellular location is the cell membrane. It localises to the nucleus. The protein resides in the cell projection. In terms of biological role, regulator of protein phosphatase 1 (PP1) that acts as a positive regulator of pulmonary endothelial cell (EC) barrier function. Protects the endothelial barrier from lipopolysaccharide (LPS)-induced vascular leakage. Involved in the regulation of the PI3K/AKT signaling pathway. Involved in the regulation of angiogenesis and endothelial cell proliferation through the control of ECE1 dephosphorylation, trafficking and activity. Involved in the regulation of endothelial cell filopodia extension. May be a downstream target for TGF-beta1 signaling cascade in endothelial cells. Involved in PKA-mediated moesin dephosphorylation which is important in EC barrier protection against thrombin stimulation. Promotes the interaction of PPP1CA with RPSA/LAMR1 and in turn facilitates the dephosphorylation of RPSA/LAMR1. Involved in the dephosphorylation of EEF1A1. The polypeptide is Protein phosphatase 1 regulatory inhibitor subunit 16B (PPP1R16B) (Bos taurus (Bovine)).